Consider the following 218-residue polypeptide: ATP phosphoribosyltransferase (218 aa).

This sequence belongs to the ATP phosphoribosyltransferase family. Short subfamily. Heteromultimer composed of HisG and HisZ subunits.

Its subcellular location is the cytoplasm. The catalysed reaction is 1-(5-phospho-beta-D-ribosyl)-ATP + diphosphate = 5-phospho-alpha-D-ribose 1-diphosphate + ATP. It participates in amino-acid biosynthesis; L-histidine biosynthesis; L-histidine from 5-phospho-alpha-D-ribose 1-diphosphate: step 1/9. Functionally, catalyzes the condensation of ATP and 5-phosphoribose 1-diphosphate to form N'-(5'-phosphoribosyl)-ATP (PR-ATP). Has a crucial role in the pathway because the rate of histidine biosynthesis seems to be controlled primarily by regulation of HisG enzymatic activity. This Acaryochloris marina (strain MBIC 11017) protein is ATP phosphoribosyltransferase.